The following is a 1183-amino-acid chain: LRR receptor-like serine/threonine-protein kinase FLS2 (1183 aa).

The first 41 residues, M1 to A41, serve as a signal peptide directing secretion. Residues A42–G809 lie on the Extracellular side of the membrane. A disulfide bridge links C87 with C94. 2 N-linked (GlcNAc...) asparagine glycosylation sites follow: N88 and N120. 13 LRR repeats span residues A97–N120, I121–L145, E147–C169, A171–L193, S194–L217, K218–L241, S242–C265, N267–L289, T290–C313, S315–L337, P338–L361, N363–L385, and R386–C409. C167 and C189 form a disulfide bridge. 2 N-linked (GlcNAc...) asparagine glycosylation sites follow: N168 and N181. N-linked (GlcNAc...) asparagine glycosylation is present at N267. Residues N363, N395, N408, and N414 are each glycosylated (N-linked (GlcNAc...) asparagine). LRR repeat units follow at residues L433–C457, Q459–Q480, L481–M505, K507–M529, S530–L553, Q555–L577, R578–R600, L601–S625, S627–L651, V652–C675, K676–Q699, D701–L724, K725–L748, and T749–N773. 3 N-linked (GlcNAc...) asparagine glycosylation sites follow: N483, N504, and N528. N-linked (GlcNAc...) asparagine glycosylation occurs at N591. N634 carries N-linked (GlcNAc...) asparagine glycosylation. Residues N707, N747, N755, and N773 are each glycosylated (N-linked (GlcNAc...) asparagine). Residues L810 to I830 form a helical membrane-spanning segment. Topologically, residues L831–D1183 are cytoplasmic. The Protein kinase domain maps to F876–L1179. Residues I882–V890 and K908 contribute to the ATP site. Catalysis depends on D1013, which acts as the Proton acceptor.

This sequence belongs to the protein kinase superfamily. Ser/Thr protein kinase family. As to quaternary structure, interacts with SERK2.

It is found in the cell membrane. It carries out the reaction L-seryl-[protein] + ATP = O-phospho-L-seryl-[protein] + ADP + H(+). The enzyme catalyses L-threonyl-[protein] + ATP = O-phospho-L-threonyl-[protein] + ADP + H(+). Constitutes the pattern-recognition receptor (PPR) that determines the specific perception of flagellin (flg22), a potent elicitor of the defense response to pathogen-associated molecular patterns (PAMPs). Recognizes flg22 from Pseudomonas aeruginosa and Acidovorax avenae. flg22 is a peptide derived from the bacterial flagellin N-terminus sequence. Does not recognize flg22 from Xanthomonas oryzae pv. oryzae (Xoo) or Xanthomonas oryzae pv. oryzicola (Xoc). This Oryza sativa subsp. japonica (Rice) protein is LRR receptor-like serine/threonine-protein kinase FLS2.